The following is a 230-amino-acid chain: DNA repair protein rdl1 (230 aa).

Interacts with rlp1 and sws1.

The protein resides in the cytoplasm. It localises to the nucleus. In terms of biological role, involved in homologous recombination where it functions at an early stage of recombination in a pre-recombinogenic complex with rlp1 and sws1. Also has a role at a later stage of recombination in association with the rhp55-rhp57 complex. The sequence is that of DNA repair protein rdl1 (rdl1) from Schizosaccharomyces pombe (strain 972 / ATCC 24843) (Fission yeast).